A 298-amino-acid chain; its full sequence is Ethanolamine ammonia-lyase small subunit (298 aa).

The targets protein to the BMC stretch occupies residues 1–19 (MDQKQIEEIVRSVMASMGQ). Adenosylcob(III)alamin contacts are provided by V210, E231, and C261.

This sequence belongs to the EutC family. As to quaternary structure, the basic unit is a heterodimer which dimerizes to form tetramers. The heterotetramers trimerize; 6 large subunits form a core ring with 6 small subunits projecting outwards. Interacts with EutS, which targets it to the interior of the BMC. It depends on adenosylcob(III)alamin as a cofactor.

The protein resides in the bacterial microcompartment. It carries out the reaction ethanolamine = acetaldehyde + NH4(+). It participates in amine and polyamine degradation; ethanolamine degradation. Catalyzes the deamination of various vicinal amino-alcohols to oxo compounds. It is spontaneously inactivated by its substrate and reactivated by EutA. May play a role in bacterial microcompartment (BMC) assembly or maintenance. Directly targeted to the BMC. In terms of biological role, expression of the eut operon allows this bacteria to use ethanolamine (EA) as a carbon, nitrogen and energy source. It relies on cobalamin (vitamin B12) both as a cofactor for the ethanolamine ammonia-lyase activity and to induce the operon. EA enhances bacterial survival in macrophages in a concentration-dependent manner, suggesting it is an important nutrient during infection. The sequence is that of Ethanolamine ammonia-lyase small subunit from Salmonella typhimurium (strain LT2 / SGSC1412 / ATCC 700720).